A 333-amino-acid chain; its full sequence is GTPase Obg (333 aa).

The Obg domain occupies 1-158; sequence MFIDSAKIYV…RNIDLELKLL (158 aa). A disordered region spans residues 121 to 143; that stretch reads HGGKGNQHFATPTNRAPRYSEPA. The OBG-type G domain occupies 159–323; the sequence is ADIGLVGFPN…LKDVLWRIIQ (165 aa). GTP is bound by residues 165–172, 190–194, 212–215, 279–282, and 304–306; these read GFPNAGKS, FTTLE, DIPG, SKMD, and SSV. Mg(2+) is bound by residues Ser172 and Thr192.

The protein belongs to the TRAFAC class OBG-HflX-like GTPase superfamily. OBG GTPase family. As to quaternary structure, monomer. It depends on Mg(2+) as a cofactor.

The protein resides in the cytoplasm. In terms of biological role, an essential GTPase which binds GTP, GDP and possibly (p)ppGpp with moderate affinity, with high nucleotide exchange rates and a fairly low GTP hydrolysis rate. Plays a role in control of the cell cycle, stress response, ribosome biogenesis and in those bacteria that undergo differentiation, in morphogenesis control. The chain is GTPase Obg from Chloroherpeton thalassium (strain ATCC 35110 / GB-78).